The primary structure comprises 162 residues: NADH-quinone oxidoreductase subunit I (162 aa).

2 consecutive 4Fe-4S ferredoxin-type domains span residues 53-83 and 93-122; these read LRRY…IESE and TRYD…ETHI. 8 residues coordinate [4Fe-4S] cluster: Cys-63, Cys-66, Cys-69, Cys-73, Cys-102, Cys-105, Cys-108, and Cys-112.

It belongs to the complex I 23 kDa subunit family. As to quaternary structure, NDH-1 is composed of 14 different subunits. Subunits NuoA, H, J, K, L, M, N constitute the membrane sector of the complex. The cofactor is [4Fe-4S] cluster.

The protein localises to the cell inner membrane. It carries out the reaction a quinone + NADH + 5 H(+)(in) = a quinol + NAD(+) + 4 H(+)(out). In terms of biological role, NDH-1 shuttles electrons from NADH, via FMN and iron-sulfur (Fe-S) centers, to quinones in the respiratory chain. The immediate electron acceptor for the enzyme in this species is believed to be ubiquinone. Couples the redox reaction to proton translocation (for every two electrons transferred, four hydrogen ions are translocated across the cytoplasmic membrane), and thus conserves the redox energy in a proton gradient. This is NADH-quinone oxidoreductase subunit I from Herminiimonas arsenicoxydans.